Reading from the N-terminus, the 445-residue chain is METILQHVPVGQKVGIAFSGGLDTSAALRWMKNKGALPYAYTANLGQPDEEDYDAIPRKALEYGAEKARLIDCRPQLANEGIAAIQAGAFHISTGGITYFNTTPLGRAVTGTMLVAAMKEDDVHIWGDGSTFKGNDIERFYRYGLLTNPALKIYKPWLDQTFIDELGGRAEMSAFMTKEGFGYKMSAEKAYSTDSNMLGATHEAKDLEHLNSGIRIVNPIMGVAFWKPEVEVKAEEVSITFDEGRPVAVNGREIADPVEMFLELNRIGGRHGLGMSDQIENRIIEAKSRGIYEAPGMALLHIAYERLVTGIHNEDTIEQYRINGLRLGRLLYQGRWFDPQAIMLRETAQRWVARAVTGTVTLELRRGNDYSILNTESPNLTYAPERLSMEKVEDAPFSPADRIGQLTMRNLDLMDTRDKLAIYSKAGLLSLGTSSALPQLGGDKK.

ATP contacts are provided by residues 17–25 (AFSGGLDTS) and alanine 43. Tyrosine 99 is an L-citrulline binding site. ATP-binding residues include glycine 129 and threonine 131. Positions 131, 135, and 136 each coordinate L-aspartate. Asparagine 135 contacts L-citrulline. Position 136 (aspartate 136) interacts with ATP. The L-citrulline site is built by arginine 139 and serine 192. Aspartate 194 provides a ligand contact to ATP. L-citrulline-binding residues include threonine 201, glutamate 203, and glutamate 280.

Belongs to the argininosuccinate synthase family. Type 2 subfamily. In terms of assembly, homotetramer.

The protein resides in the cytoplasm. The enzyme catalyses L-citrulline + L-aspartate + ATP = 2-(N(omega)-L-arginino)succinate + AMP + diphosphate + H(+). The protein operates within amino-acid biosynthesis; L-arginine biosynthesis; L-arginine from L-ornithine and carbamoyl phosphate: step 2/3. The chain is Argininosuccinate synthase (argG) from Ralstonia nicotianae (strain ATCC BAA-1114 / GMI1000) (Ralstonia solanacearum).